Here is a 588-residue protein sequence, read N- to C-terminus: Methylcrotonoyl-CoA carboxylase beta chain, mitochondrial (588 aa).

Residues 72–329 (MNSTLKQLKE…KKQPSPVITE (258 aa)) form the CoA carboxyltransferase N-terminal domain. A carboxyltransferase region spans residues 72-570 (MNSTLKQLKE…RKVIALSLSA (499 aa)). A CoA carboxyltransferase C-terminal domain is found at 329–570 (ETEEPLYPTS…RKVIALSLSA (242 aa)). Residues 366 to 395 (RFDEFKELYGTTLICGFARVHGMPVGIIAN) are acyl-CoA binding.

This sequence belongs to the AccD/PCCB family. Probably a dodecamer composed of six biotin-containing alpha subunits and six beta subunits.

It localises to the mitochondrion matrix. It carries out the reaction 3-methylbut-2-enoyl-CoA + hydrogencarbonate + ATP = 3-methyl-(2E)-glutaconyl-CoA + ADP + phosphate + H(+). It functions in the pathway amino-acid degradation; L-leucine degradation; (S)-3-hydroxy-3-methylglutaryl-CoA from 3-isovaleryl-CoA: step 2/3. Functionally, carboxyltransferase subunit of the 3-methylcrotonyl-CoA carboxylase, an enzyme that catalyzes the conversion of 3-methylcrotonyl-CoA to 3-methylglutaconyl-CoA, a critical step for leucine and isovaleric acid catabolism. The sequence is that of Methylcrotonoyl-CoA carboxylase beta chain, mitochondrial (mccb) from Dictyostelium discoideum (Social amoeba).